Here is a 201-residue protein sequence, read N- to C-terminus: Holliday junction branch migration complex subunit RuvA (201 aa).

The interval 1-64 is domain I; it reads MIGRLHGKII…EDAHLLFGFA (64 aa). Residues 65 to 143 form a domain II region; it reads QKQDRTLFRE…GVAQSDFFEE (79 aa). Residues 144-154 are flexible linker; that stretch reads HSVETIVATHS. Positions 154-201 are domain III; sequence SHDPADEARDALVALGYKLADAEKMIKKVNKAGATSEQLIREALKASL.

This sequence belongs to the RuvA family. As to quaternary structure, homotetramer. Forms an RuvA(8)-RuvB(12)-Holliday junction (HJ) complex. HJ DNA is sandwiched between 2 RuvA tetramers; dsDNA enters through RuvA and exits via RuvB. An RuvB hexamer assembles on each DNA strand where it exits the tetramer. Each RuvB hexamer is contacted by two RuvA subunits (via domain III) on 2 adjacent RuvB subunits; this complex drives branch migration. In the full resolvosome a probable DNA-RuvA(4)-RuvB(12)-RuvC(2) complex forms which resolves the HJ.

It localises to the cytoplasm. In terms of biological role, the RuvA-RuvB-RuvC complex processes Holliday junction (HJ) DNA during genetic recombination and DNA repair, while the RuvA-RuvB complex plays an important role in the rescue of blocked DNA replication forks via replication fork reversal (RFR). RuvA specifically binds to HJ cruciform DNA, conferring on it an open structure. The RuvB hexamer acts as an ATP-dependent pump, pulling dsDNA into and through the RuvAB complex. HJ branch migration allows RuvC to scan DNA until it finds its consensus sequence, where it cleaves and resolves the cruciform DNA. The protein is Holliday junction branch migration complex subunit RuvA of Actinobacillus pleuropneumoniae serotype 5b (strain L20).